Reading from the N-terminus, the 112-residue chain is UPF0102 protein CHAB381_0216 (112 aa).

The protein belongs to the UPF0102 family.

The protein is UPF0102 protein CHAB381_0216 of Campylobacter hominis (strain ATCC BAA-381 / DSM 21671 / CCUG 45161 / LMG 19568 / NCTC 13146 / CH001A).